Reading from the N-terminus, the 80-residue chain is Kappa-actitoxin-Avd4i (80 aa).

An N-terminal signal peptide occupies residues 1–19 (MNKALFLCLVVLCAAVVFA). The propeptide occupies 20–31 (AEDLQKAKHAPF). Cystine bridges form between Cys-41/Cys-76, Cys-43/Cys-69, and Cys-59/Cys-77.

It belongs to the sea anemone type 3 (BDS) potassium channel toxin family. In terms of tissue distribution, weakly expressed in the ectodermal tissue from the distal and proximal tentacles, body wall, and oral disk.

Its subcellular location is the secreted. The protein localises to the nematocyst. Blocks Kv3 voltage-gated potassium channels. Reduces blood pressure. The chain is Kappa-actitoxin-Avd4i from Anemonia viridis (Snakelocks anemone).